The sequence spans 99 residues: uncharacterized protein (99 aa).

This is an uncharacterized protein from Caenorhabditis elegans.